The chain runs to 250 residues: 2,3-bisphosphoglycerate-dependent phosphoglycerate mutase (250 aa).

Residues 10–17 (RHGESQWN), 23–24 (TG), arginine 62, 89–92 (ERHY), lysine 100, 116–117 (RR), and 185–186 (GN) contribute to the substrate site. Histidine 11 (tele-phosphohistidine intermediate) is an active-site residue. Glutamate 89 acts as the Proton donor/acceptor in catalysis.

It belongs to the phosphoglycerate mutase family. BPG-dependent PGAM subfamily. In terms of assembly, homodimer.

It carries out the reaction (2R)-2-phosphoglycerate = (2R)-3-phosphoglycerate. Its pathway is carbohydrate degradation; glycolysis; pyruvate from D-glyceraldehyde 3-phosphate: step 3/5. Catalyzes the interconversion of 2-phosphoglycerate and 3-phosphoglycerate. The polypeptide is 2,3-bisphosphoglycerate-dependent phosphoglycerate mutase (Shigella dysenteriae serotype 1 (strain Sd197)).